The sequence spans 273 residues: Protein FAM216A (273 aa).

Residues 1 to 47 (MLGQLLPHTARGLGAAEMPGQGPGSDWTERSSSAEPPAVAGTEGGGG) form a disordered region.

This sequence belongs to the FAM216 family.

The polypeptide is Protein FAM216A (FAM216A) (Homo sapiens (Human)).